The following is a 226-amino-acid chain: Fibrillarin-like rRNA/tRNA 2'-O-methyltransferase (226 aa).

S-adenosyl-L-methionine contacts are provided by residues 82 to 83, 100 to 101, 125 to 126, and 145 to 148; these read TT, EF, DA, and DVAQ.

This sequence belongs to the methyltransferase superfamily. Fibrillarin family. In terms of assembly, interacts with nop5. Component of box C/D small ribonucleoprotein (sRNP) particles that contain rpl7ae, FlpA and nop5, plus a guide RNA.

Involved in pre-rRNA and tRNA processing. Utilizes the methyl donor S-adenosyl-L-methionine to catalyze the site-specific 2'-hydroxyl methylation of ribose moieties in rRNA and tRNA. Site specificity is provided by a guide RNA that base pairs with the substrate. Methylation occurs at a characteristic distance from the sequence involved in base pairing with the guide RNA. This Methanosarcina barkeri (strain Fusaro / DSM 804) protein is Fibrillarin-like rRNA/tRNA 2'-O-methyltransferase.